We begin with the raw amino-acid sequence, 580 residues long: E3 ubiquitin-protein ligase TRIM45 (580 aa).

The RING-type zinc-finger motif lies at 29 to 98; sequence CPLCMGLFKA…QIGILCPVCD (70 aa). B box-type zinc fingers lie at residues 130 to 176 and 186 to 227; these read GQGL…MVDL and GKPI…CDFT. The Zn(2+) site is built by cysteine 135, cysteine 138, cysteine 158, histidine 162, cysteine 191, histidine 194, cysteine 214, and histidine 219. The stretch at 281-335 forms a coiled coil; it reads SEGYIKAIEEHRDKLLKQLEDIRVQKENSLQLQKAQLEQLLADMRTGVEFTEHLL. One copy of the Filamin repeat lies at 394–497; sequence TKEVDPAKCV…VQGSPFTVTV (104 aa).

The protein belongs to the TRIM/RBCC family.

The protein resides in the cytoplasm. It localises to the nucleus. The enzyme catalyses S-ubiquitinyl-[E2 ubiquitin-conjugating enzyme]-L-cysteine + [acceptor protein]-L-lysine = [E2 ubiquitin-conjugating enzyme]-L-cysteine + N(6)-ubiquitinyl-[acceptor protein]-L-lysine.. Its function is as follows. E3 ubiquitin-protein ligase that plays a role in the regulation of inflammatory response. Mechanistically, mediates the 'Lys-48'-linked polyubiquitination of TAB2, a regulatory protein of the kinase TAK1, leading to its degradation via the proteasomal pathway and inhibition of the TLR-mediated inflammatory immune response. May act as a transcriptional repressor in mitogen-activated protein kinase signaling pathway. The polypeptide is E3 ubiquitin-protein ligase TRIM45 (TRIM45) (Bos taurus (Bovine)).